We begin with the raw amino-acid sequence, 245 residues long: PF03932 family protein CutC (245 aa).

The protein belongs to the CutC family.

The protein resides in the cytoplasm. The protein is PF03932 family protein CutC of Rhizobium meliloti (strain 1021) (Ensifer meliloti).